Consider the following 460-residue polypeptide: Elongation factor 1-alpha-A (460 aa).

Gly2 is subject to N,N,N-trimethylglycine. Lys3 carries the post-translational modification N6,N6-dimethyllysine; alternate. Lys3 carries the post-translational modification N6-methyllysine; alternate. The tr-type G domain occupies 5–240; the sequence is KGHINVVVIG…DSIEPPARPT (236 aa). Positions 14-21 are G1; sequence GHVDSGKS. 14 to 21 is a GTP binding site; that stretch reads GHVDSGKS. Position 30 is an N6-methyllysine (Lys30). The interval 70-74 is G2; the sequence is GITID. Lys79 bears the N6,N6,N6-trimethyllysine mark. The interval 91–94 is G3; that stretch reads DAPG. Residues 91 to 95 and 153 to 156 contribute to the GTP site; these read DAPGH and NKMD. The interval 153–156 is G4; sequence NKMD. Residues 192–194 are G5; it reads SGF. Lys316 is subject to N6,N6-dimethyllysine; alternate. An N6-methyllysine; alternate modification is found at Lys316. Lys390 carries the N6-methyllysine modification.

This sequence belongs to the TRAFAC class translation factor GTPase superfamily. Classic translation factor GTPase family. EF-Tu/EF-1A subfamily.

The protein resides in the cytoplasm. Functionally, this protein promotes the GTP-dependent binding of aminoacyl-tRNA to the A-site of ribosomes during protein biosynthesis. This Schizosaccharomyces pombe (strain 972 / ATCC 24843) (Fission yeast) protein is Elongation factor 1-alpha-A (tef101).